A 415-amino-acid polypeptide reads, in one-letter code: Calreticulin (415 aa).

The signal sequence occupies residues 1 to 20 (MANPKSLSLFLLSLLAIASA). Asparagine 52 carries an N-linked (GlcNAc...) asparagine glycan. Cysteines 106 and 138 form a disulfide. Positions 110, 112, 129, and 136 each coordinate an alpha-D-glucoside. Asparagine 152 carries N-linked (GlcNAc...) asparagine glycosylation. 7 consecutive repeat copies span residues 192-203 (KQTGSLYTDWDL), 211-222 (DPEAKKPEDWDE), 228-239 (DPEDKKPEGYDD), 246-257 (DPDAKKPEDWDD), 261-271 (GEWTAPTIANP), 275-285 (GPWKPKKIKNP), and 289-299 (GKWKAPMIDNP). The tract at residues 192-257 (KQTGSLYTDW…DAKKPEDWDD (66 aa)) is 4 X approximate repeats. The span at 208–253 (KIKDPEAKKPEDWDEKEYIPDPEDKKPEGYDDIPKEIPDPDAKKPE) shows a compositional bias: basic and acidic residues. The interval 208–276 (KIKDPEAKKP…TIANPEYKGP (69 aa)) is disordered. Residues 261–299 (GEWTAPTIANPEYKGPWKPKKIKNPNYKGKWKAPMIDNP) are 3 X approximate repeats. Residue glutamate 319 coordinates an alpha-D-glucoside. Residues 347 to 376 (ETWGKNKDAEKAAFEEAEKKKEEEESKDDP) are compositionally biased toward basic and acidic residues. Residues 347–415 (ETWGKNKDAE…DSAEDVHDEL (69 aa)) form a disordered region. Composition is skewed to acidic residues over residues 377-397 (ADSD…EDDG) and 404-415 (AEDSAEDVHDEL). The Prevents secretion from ER motif lies at 412–415 (HDEL).

It belongs to the calreticulin family.

Its subcellular location is the endoplasmic reticulum lumen. Its function is as follows. Molecular calcium-binding chaperone promoting folding, oligomeric assembly and quality control in the ER via the calreticulin/calnexin cycle. This lectin may interact transiently with almost all of the monoglucosylated glycoproteins that are synthesized in the ER. In Ricinus communis (Castor bean), this protein is Calreticulin.